A 141-amino-acid polypeptide reads, in one-letter code: Large ribosomal subunit protein uL11 (141 aa).

The protein belongs to the universal ribosomal protein uL11 family. In terms of assembly, part of the ribosomal stalk of the 50S ribosomal subunit. Interacts with L10 and the large rRNA to form the base of the stalk. L10 forms an elongated spine to which L12 dimers bind in a sequential fashion forming a multimeric L10(L12)X complex. One or more lysine residues are methylated.

Functionally, forms part of the ribosomal stalk which helps the ribosome interact with GTP-bound translation factors. The chain is Large ribosomal subunit protein uL11 from Synechococcus elongatus (strain ATCC 33912 / PCC 7942 / FACHB-805) (Anacystis nidulans R2).